Consider the following 1408-residue polypeptide: DNA-directed RNA polymerase subunit beta' (1408 aa).

Zn(2+)-binding residues include C70, C72, C85, and C88. Mg(2+) is bound by residues D460, D462, and D464. Zn(2+)-binding residues include C814, C888, C895, and C898.

Belongs to the RNA polymerase beta' chain family. The RNAP catalytic core consists of 2 alpha, 1 beta, 1 beta' and 1 omega subunit. When a sigma factor is associated with the core the holoenzyme is formed, which can initiate transcription. The cofactor is Mg(2+). It depends on Zn(2+) as a cofactor.

The enzyme catalyses RNA(n) + a ribonucleoside 5'-triphosphate = RNA(n+1) + diphosphate. Functionally, DNA-dependent RNA polymerase catalyzes the transcription of DNA into RNA using the four ribonucleoside triphosphates as substrates. This is DNA-directed RNA polymerase subunit beta' from Baumannia cicadellinicola subsp. Homalodisca coagulata.